Reading from the N-terminus, the 237-residue chain is MQKQAELYRGKAKTVYSTENPDLLVLEFRNDTSAGDGARIEQFDRKGMVNNKFNHFIMTKLAEAGIPTQMEQLLSDTECLVKKLDMVPVECVVRNRAAGSLVKRLGIEEGIELNPPLFDLFLKNDAMHDPMVNDSYCETFGWVSKENLARMKELTYKANDVLKKLFDDAGLILVDFKLEFGLYKGEVVLGDEFSPDGSRLWDKETLDKMDKDRFRQSLGGLIEAYETVARRLGVQLD.

This sequence belongs to the SAICAR synthetase family.

The enzyme catalyses 5-amino-1-(5-phospho-D-ribosyl)imidazole-4-carboxylate + L-aspartate + ATP = (2S)-2-[5-amino-1-(5-phospho-beta-D-ribosyl)imidazole-4-carboxamido]succinate + ADP + phosphate + 2 H(+). It functions in the pathway purine metabolism; IMP biosynthesis via de novo pathway; 5-amino-1-(5-phospho-D-ribosyl)imidazole-4-carboxamide from 5-amino-1-(5-phospho-D-ribosyl)imidazole-4-carboxylate: step 1/2. This chain is Phosphoribosylaminoimidazole-succinocarboxamide synthase, found in Citrobacter koseri (strain ATCC BAA-895 / CDC 4225-83 / SGSC4696).